The chain runs to 333 residues: MLRTLRPTLPSRCLRLYSTAPEKPSLKLVAELRKRTEVSIVKAREALSASNNDIEAALQWLAKDLETTGAKKAAKVGGRTTNEGLVSVSILSNFTASGLQRGIRAAMIELNCETDFVGRNELFGRLAGDIAHTAAVVAEPGASVFQNLSLEFLQEAPLVSRSDPTSAPSGTVATTIRDTIAKVGENITLRRALVVAAEPPAADAAQALRLGQYVHGTIHQPTEGRIGTLALLGLKYPSPKGFTQETTEKLASLERALARQIVGFPTQSIKGSEETALYSQPFMMLPGELNSRPVGEALQAWSVQQGIVGSEGDAGAVEVLEFAKWSVGEPLES.

A mitochondrion-targeting transit peptide spans 1-17 (MLRTLRPTLPSRCLRLY).

This sequence belongs to the EF-Ts family.

It localises to the mitochondrion. Associates with the EF-Tu.GDP complex and induces the exchange of GDP to GTP. It remains bound to the aminoacyl-tRNA.EF-Tu.GTP complex up to the GTP hydrolysis stage on the ribosome. In Coprinopsis cinerea (strain Okayama-7 / 130 / ATCC MYA-4618 / FGSC 9003) (Inky cap fungus), this protein is Elongation factor Ts, mitochondrial.